A 391-amino-acid polypeptide reads, in one-letter code: Formate-dependent phosphoribosylglycinamide formyltransferase (391 aa).

N(1)-(5-phospho-beta-D-ribosyl)glycinamide-binding positions include 20–21 (EL) and glutamate 80. Residues arginine 112, lysine 153, 158-163 (SSGKGQ), 193-196 (EGFV), and glutamate 201 contribute to the ATP site. The 190-residue stretch at 117 to 306 (RLAAEELGLP…EFALHVRAFT (190 aa)) folds into the ATP-grasp domain. Mg(2+) contacts are provided by glutamate 265 and glutamate 277. N(1)-(5-phospho-beta-D-ribosyl)glycinamide-binding positions include aspartate 284, lysine 354, and 361–362 (RR).

This sequence belongs to the PurK/PurT family. As to quaternary structure, homodimer.

The enzyme catalyses N(1)-(5-phospho-beta-D-ribosyl)glycinamide + formate + ATP = N(2)-formyl-N(1)-(5-phospho-beta-D-ribosyl)glycinamide + ADP + phosphate + H(+). Its pathway is purine metabolism; IMP biosynthesis via de novo pathway; N(2)-formyl-N(1)-(5-phospho-D-ribosyl)glycinamide from N(1)-(5-phospho-D-ribosyl)glycinamide (formate route): step 1/1. In terms of biological role, involved in the de novo purine biosynthesis. Catalyzes the transfer of formate to 5-phospho-ribosyl-glycinamide (GAR), producing 5-phospho-ribosyl-N-formylglycinamide (FGAR). Formate is provided by PurU via hydrolysis of 10-formyl-tetrahydrofolate. In Vibrio cholerae serotype O1 (strain ATCC 39315 / El Tor Inaba N16961), this protein is Formate-dependent phosphoribosylglycinamide formyltransferase.